We begin with the raw amino-acid sequence, 214 residues long: Insulin-like growth factor 2 (214 aa).

The tract at residues 48 to 79 is b; sequence EVASAETLCGGELVDALQFVCEDRGFYFSRPT. Intrachain disulfides connect Cys-56–Cys-97, Cys-68–Cys-110, and Cys-96–Cys-101. Residues 80-90 are c; it reads SRSNSRRSQNR. The a stretch occupies residues 91–111; it reads GIVEECCFRSCDLNLLEQYCA. The segment at 112-117 is d; sequence KPAKSE. A propeptide spans 118–214 (e peptide); sequence RDVSATSLQI…PPTDNYVSHN (97 aa).

The protein belongs to the insulin family.

The protein localises to the secreted. The insulin-like growth factors, isolated from plasma, are structurally and functionally related to insulin but have a much higher growth-promoting activity. Acts as a ligand for integrin which is required for IGF2 signaling. In Oncorhynchus mykiss (Rainbow trout), this protein is Insulin-like growth factor 2.